The primary structure comprises 323 residues: Transcriptional regulator protein Pur-beta-A (323 aa).

3 disordered regions span residues 1 to 34 (MADGDSGSERGGSSGGPGGFSQHMSREQETQELA), 100 to 122 (SPEQIAQASGEDGAGGPGGPRRA), and 286 to 323 (QERQRDKMYERRGPGDRERSLGPGGGGDDSETEDVDDD). The residue at position 2 (alanine 2) is an N-acetylalanine. Over residues 9–19 (ERGGSSGGPGG) the composition is skewed to gly residues. Residues 24 to 34 (MSREQETQELA) show a composition bias toward basic and acidic residues. The DNA-binding stretch occupies residues 27–257 (EQETQELATK…LRVSEVKPSY (231 aa)). Over residues 286-305 (QERQRDKMYERRGPGDRERS) the composition is skewed to basic and acidic residues. The segment covering 313-323 (DDSETEDVDDD) has biased composition (acidic residues).

Belongs to the PUR DNA-binding protein family.

The protein resides in the nucleus. Its function is as follows. Transcriptional regulator which can act as an activator or a repressor. This is Transcriptional regulator protein Pur-beta-A (purb-a) from Xenopus laevis (African clawed frog).